Here is a 470-residue protein sequence, read N- to C-terminus: MCENQLKTKADATAQIEVIPCKICGDKSSGIHYGVITCEGCKGFFRRSQQNNASYSCPRQRNCLIDRTNRNRCQHCRLQKCLALGMSRDAVKFGRMSKKQRDSLYAEVQKHQQRLQEQRQQQSGEAEALARVYSSSISNGLSNLNNETSGTYANGHVIDLPKSEGYYNVDSGQPSPDQSGLDMTGIKQIKQEPIYDLTSVPNLFTYSSFNNGQLAPGITMTEIDRIAQNIIKSHLETCQYTMEELHQLAWQTHTYEEIKAYQSKSREALWQQCAIQITHAIQYVVEFAKRITGFMELCQNDQILLLKSGCLEVVLVRMCRAFNPLNNTVLFEGKYGGMQMFKALGSDDLVNEAFDFAKNLCSLQLTEEEIALFSSAVLISPDRAWLIEPRKVQKLQEKIYFALQHVIQKNHLDDETLAKLIAKIPTITAVCNLHGEKLQVFKQSHPEIVNTLFPPLYKELFNPDCATGCK.

Residues 18 to 93 (VIPCKICGDK…LGMSRDAVKF (76 aa)) constitute a DNA-binding region (nuclear receptor). NR C4-type zinc fingers lie at residues 21–41 (CKIC…CEGC) and 57–81 (CPRQ…LQKC). Basic and acidic residues predominate over residues 104 to 117 (LYAEVQKHQQRLQE). The disordered stretch occupies residues 104–127 (LYAEVQKHQQRLQEQRQQQSGEAE). In terms of domain architecture, NR LBD spans 222–460 (EIDRIAQNII…TLFPPLYKEL (239 aa)). Positions 456 to 461 (LYKELF) match the AF-2 motif.

It belongs to the nuclear hormone receptor family. NR1 subfamily. Monomer. Interacts with CRX.

The protein localises to the nucleus. It localises to the nucleoplasm. In terms of biological role, nuclear receptor that binds DNA as a monomer to ROR response elements (RORE) containing a single core motif half-site 5'-AGGTCA-3' preceded by a short A-T-rich sequence. Considered to have intrinsic transcriptional activity, have some natural ligands such as all-trans retinoic acid (ATRA) and other retinoids which act as inverse agonists repressing the transcriptional activity. Required for normal postnatal development of rod and cone photoreceptor cells. Modulates rod photoreceptors differentiation at least by inducing the transcription factor NRL-mediated pathway. In cone photoreceptor cells, regulates transcription of OPN1SW. Involved in the regulation of the period length and stability of the circadian rhythm. May control cytoarchitectural patterning of neocortical neurons during development. May act in a dose-dependent manner to regulate barrel formation upon innervation of layer IV neurons by thalamocortical axons. May play a role in the suppression of osteoblastic differentiation through the inhibition of RUNX2 transcriptional activity. Functionally, isoform 1 is critical for hindlimb motor control and for the differentiation of amacrine and horizontal cells in the retina. Regulates the expression of PTF1A synergistically with FOXN4. This chain is Nuclear receptor ROR-beta (RORB), found in Homo sapiens (Human).